The chain runs to 319 residues: Methyltransferase tpcM (319 aa).

The tract at residues 63-155 (DVGAGIGPYA…QLRPGGTFAC (93 aa)) is methyltransferase domain.

This sequence belongs to the methyltransferase superfamily. As to expression, specifically expressed in conidia.

It functions in the pathway secondary metabolite biosynthesis. Functionally, methyltransferase; part of the gene cluster that mediates the biosynthesis of trypacidin, a mycotoxin with antiprotozoal activity and that plays a role in the infection process. The pathway begins with the synthesis of atrochrysone thioester by the polyketide synthase (PKS) tpcC. The atrochrysone carboxyl ACP thioesterase tpcB then breaks the thioester bond and releases the atrochrysone carboxylic acid from tpcC. The decarboxylase tpcK converts atrochrysone carboxylic acid to atrochrysone which is further reduced into emodin anthrone. The next step is performed by the emodin anthrone oxygenase tpcL that catalyzes the oxidation of emodinanthrone to emodin. Emodin O-methyltransferase encoded by tpcA catalyzes methylation of the 8-hydroxy group of emodin to form questin. Ring cleavage of questin by questin oxidase tpcI leads to desmethylsulochrin via several intermediates including questin epoxide. Another methylation step catalyzed by tpcM leads to the formation of sulochrin which is further converted to monomethylsulfochrin by tpcH. Finally, the tpcJ catalyzes the conversion of monomethylsulfochrin to trypacidin. Trypacidin is toxic for human pulmonary and bronchial epithelial cells by initiating the intracellular formation of nitric oxide (NO) and hydrogen peroxide (H(2)O(2)), thus triggering host necrotic cell death. The trypacidin pathway is also able to produce endocrocin via a distinct route from the endocrocin Enc pathway. This is Methyltransferase tpcM from Aspergillus fumigatus (strain ATCC MYA-4609 / CBS 101355 / FGSC A1100 / Af293) (Neosartorya fumigata).